The primary structure comprises 153 residues: Transcriptional repressor NrdR (153 aa).

A zinc finger spans residues 3 to 33 (CPYCNYKESKVIDSRHTDLKSIRRRRECESC). One can recognise an ATP-cone domain in the interval 48–138 (LMVIKKDNSR…VYRQFKDINT (91 aa)).

The protein belongs to the NrdR family. Zn(2+) is required as a cofactor.

Functionally, negatively regulates transcription of bacterial ribonucleotide reductase nrd genes and operons by binding to NrdR-boxes. The polypeptide is Transcriptional repressor NrdR (Clostridioides difficile (strain 630) (Peptoclostridium difficile)).